The primary structure comprises 182 residues: Transcription termination/antitermination protein NusG (182 aa).

Residues 131 to 161 (GEVVRVNEGPFADFNGTVEEVDYEKSRLKVS) enclose the KOW domain.

This sequence belongs to the NusG family.

Its function is as follows. Participates in transcription elongation, termination and antitermination. The polypeptide is Transcription termination/antitermination protein NusG (Vibrio parahaemolyticus serotype O3:K6 (strain RIMD 2210633)).